Reading from the N-terminus, the 156-residue chain is Ribosomal RNA large subunit methyltransferase H (156 aa).

Residues Leu73, Gly104, and 123–128 (IGPLTL) contribute to the S-adenosyl-L-methionine site.

The protein belongs to the RNA methyltransferase RlmH family. Homodimer.

The protein localises to the cytoplasm. The catalysed reaction is pseudouridine(1915) in 23S rRNA + S-adenosyl-L-methionine = N(3)-methylpseudouridine(1915) in 23S rRNA + S-adenosyl-L-homocysteine + H(+). In terms of biological role, specifically methylates the pseudouridine at position 1915 (m3Psi1915) in 23S rRNA. This Xanthomonas axonopodis pv. citri (strain 306) protein is Ribosomal RNA large subunit methyltransferase H.